The primary structure comprises 462 residues: Nucleolar protein 12 (462 aa).

2 disordered regions span residues leucine 24–serine 148 and lysine 191–lysine 215. Acidic residues predominate over residues proline 47–valine 59. The span at glycine 108 to serine 124 shows a compositional bias: basic and acidic residues. Residues serine 125–threonine 134 are compositionally biased toward acidic residues. Positions aspartate 137–serine 146 are enriched in polar residues. A compositionally biased stretch (acidic residues) spans aspartate 198 to glutamate 211. Residues arginine 297 to asparagine 378 enclose the RRM domain. Disordered stretches follow at residues lysine 381–threonine 400 and glutamate 432–glutamine 462. Residues glutamine 383 to glutamine 397 show a composition bias toward polar residues. Over residues lysine 438–alanine 455 the composition is skewed to basic residues.

This sequence belongs to the RRM RBM34 family.

Its subcellular location is the nucleus. The protein resides in the nucleolus. Its function is as follows. Involved in pre-25S rRNA processing. The sequence is that of Nucleolar protein 12 (NOP12) from Kluyveromyces lactis (strain ATCC 8585 / CBS 2359 / DSM 70799 / NBRC 1267 / NRRL Y-1140 / WM37) (Yeast).